The sequence spans 151 residues: Ribosome maturation factor RimP (151 aa).

The protein belongs to the RimP family.

The protein resides in the cytoplasm. In terms of biological role, required for maturation of 30S ribosomal subunits. In Shewanella piezotolerans (strain WP3 / JCM 13877), this protein is Ribosome maturation factor RimP.